Here is a 125-residue protein sequence, read N- to C-terminus: Small ribosomal subunit protein eS8 (125 aa).

Belongs to the eukaryotic ribosomal protein eS8 family. Part of the 30S ribosomal subunit.

In Methanosphaerula palustris (strain ATCC BAA-1556 / DSM 19958 / E1-9c), this protein is Small ribosomal subunit protein eS8.